Reading from the N-terminus, the 155-residue chain is S-ribosylhomocysteine lyase (155 aa).

The Fe cation site is built by His58, His62, and Cys125.

This sequence belongs to the LuxS family. As to quaternary structure, homodimer. Requires Fe cation as cofactor.

The catalysed reaction is S-(5-deoxy-D-ribos-5-yl)-L-homocysteine = (S)-4,5-dihydroxypentane-2,3-dione + L-homocysteine. In terms of biological role, involved in the synthesis of autoinducer 2 (AI-2) which is secreted by bacteria and is used to communicate both the cell density and the metabolic potential of the environment. The regulation of gene expression in response to changes in cell density is called quorum sensing. Catalyzes the transformation of S-ribosylhomocysteine (RHC) to homocysteine (HC) and 4,5-dihydroxy-2,3-pentadione (DPD). In Helicobacter pylori (strain Shi470), this protein is S-ribosylhomocysteine lyase.